Reading from the N-terminus, the 261-residue chain is 14-3-3 protein 9 (261 aa).

The tract at residues proline 239 to glutamate 261 is disordered.

This sequence belongs to the 14-3-3 family. Homodimer.

The chain is 14-3-3 protein 9 (TFT9) from Solanum lycopersicum (Tomato).